The sequence spans 746 residues: WD repeat-containing and planar cell polarity effector protein fritz homolog (746 aa).

WD repeat units lie at residues 326–374 (IQCV…TLLA) and 375–414 (QTELLPSLISCHPSGAILLVGSNQGELQIFDMALSPINIQ).

This sequence belongs to the WD repeat fritz family. In terms of assembly, component of the CPLANE (ciliogenesis and planar polarity effectors) complex, composed of INTU, FUZ and WDPCP. Interacts with CPLANE1.

The protein localises to the cell membrane. It localises to the cytoplasm. It is found in the cytoskeleton. The protein resides in the cilium axoneme. Its subcellular location is the cilium basal body. Functionally, probable effector of the planar cell polarity signaling pathway which regulates the septin cytoskeleton in both ciliogenesis and collective cell movements. Together with FUZ and WDPCP proposed to function as core component of the CPLANE (ciliogenesis and planar polarity effectors) complex involved in the recruitment of peripheral IFT-A proteins to basal bodies. Binds phosphatidylinositol 3-phosphate with highest affinity, followed by phosphatidylinositol 4-phosphate and phosphatidylinositol 5-phosphate. This Homo sapiens (Human) protein is WD repeat-containing and planar cell polarity effector protein fritz homolog (WDPCP).